A 234-amino-acid chain; its full sequence is Large ribosomal subunit protein uL1 (234 aa).

This sequence belongs to the universal ribosomal protein uL1 family. Part of the 50S ribosomal subunit.

Its function is as follows. Binds directly to 23S rRNA. The L1 stalk is quite mobile in the ribosome, and is involved in E site tRNA release. Protein L1 is also a translational repressor protein, it controls the translation of the L11 operon by binding to its mRNA. Functionally, peptides originating from the N-terminal end of L1 have antibacterial activity against bacteria such as E.coli and B.megaterium and modest antifungal activities. Has no effect on H.pylori itself. Peptides are not hemolytic against mammalian cells. These peptides may be released in the stomach during altruistic lysis to kill other fast growing bacteria. The protein is Large ribosomal subunit protein uL1 of Helicobacter pylori (strain ATCC 700392 / 26695) (Campylobacter pylori).